The following is a 446-amino-acid chain: Coagulation factor VII (446 aa).

A signal peptide spans 1–24; it reads MVPQAHGLLLLCFLLQLQGPLGTA. The propeptide occupies 25–41; it reads VFITQEEAHGVLHRQRR. Positions 42-86 constitute a Gla domain; it reads ANSLLEELWPGSLERECNEEQCSFEEAREIFKSPERTKQFWIVYS. 4-carboxyglutamate occurs at positions 47, 48, 55, 57, 60, 61, 66, 67, 70, and 76. Cys-58 and Cys-63 are oxidised to a cystine. The EGF-like 1; calcium-binding domain occupies 87 to 123; that stretch reads DGDQCASNPCQNGGTCQDHLKSYVCFCLLDFEGRNCE. 10 disulfide bridges follow: Cys-91–Cys-102, Cys-96–Cys-111, Cys-113–Cys-122, Cys-132–Cys-143, Cys-139–Cys-153, Cys-155–Cys-168, Cys-176–Cys-303, Cys-200–Cys-205, Cys-219–Cys-235, and Cys-351–Cys-370. Ser-93 carries O-linked (Glc...) serine; alternate glycosylation. O-linked (Xyl...) serine; alternate glycosylation occurs at Ser-93. The residue at position 104 (Asp-104) is a (3R)-3-hydroxyaspartate. Residues 128–169 enclose the EGF-like 2 domain; sequence EQLICANENGDCDQYCRDHVGTKRTCSCHEDYTLQPDEVSCK. N-linked (GlcNAc...) asparagine glycosylation is present at Asn-186. The 240-residue stretch at 194–433 folds into the Peptidase S1 domain; the sequence is IVGGNVCPKG…YIDWLVRHMD (240 aa). Catalysis depends on His-234, which acts as the Charge relay system. A glycan (N-linked (GlcNAc...) asparagine) is linked at Asn-244. Residue Asp-283 is the Charge relay system of the active site. Asp-379 serves as a coordination point for substrate. A disulfide bridge links Cys-381 with Cys-409. Residue Ser-385 is the Charge relay system of the active site.

It belongs to the peptidase S1 family. In terms of assembly, heterodimer of a light chain and a heavy chain linked by a disulfide bond. The vitamin K-dependent, enzymatic carboxylation of some glutamate residues allows the modified protein to bind calcium. In terms of processing, the iron and 2-oxoglutarate dependent 3-hydroxylation of aspartate and asparagine is (R) stereospecific within EGF domains. Post-translationally, can be either O-glucosylated or O-xylosylated at Ser-93 by POGLUT1. Plasma and liver.

Its subcellular location is the secreted. It carries out the reaction Selective cleavage of Arg-|-Ile bond in factor X to form factor Xa.. Functionally, initiates the extrinsic pathway of blood coagulation. Serine protease that circulates in the blood in a zymogen form. Factor VII is converted to factor VIIa by factor Xa, factor XIIa, factor IXa, or thrombin by minor proteolysis. In the presence of tissue factor and calcium ions, factor VIIa then converts factor X to factor Xa by limited proteolysis. Factor VIIa also converts factor IX to factor IXa in the presence of tissue factor and calcium. The protein is Coagulation factor VII (F7) of Mus musculus (Mouse).